Here is a 361-residue protein sequence, read N- to C-terminus: Holliday junction branch migration complex subunit RuvB (361 aa).

The interval 1-181 (MKDQRLLDSV…FGIPIRLNFY (181 aa)) is large ATPase domain (RuvB-L). Residues L20, R21, G62, K65, T66, T67, 128-130 (EDY), R171, Y181, and R218 contribute to the ATP site. T66 serves as a coordination point for Mg(2+). The tract at residues 182 to 252 (TIEELEYIVQ…VADEALSRLE (71 aa)) is small ATPAse domain (RuvB-S). The interval 255–361 (HLGLDPLDRR…QTTLWDEADE (107 aa)) is head domain (RuvB-H). The DNA site is built by R291, R310, and R315.

Belongs to the RuvB family. As to quaternary structure, homohexamer. Forms an RuvA(8)-RuvB(12)-Holliday junction (HJ) complex. HJ DNA is sandwiched between 2 RuvA tetramers; dsDNA enters through RuvA and exits via RuvB. An RuvB hexamer assembles on each DNA strand where it exits the tetramer. Each RuvB hexamer is contacted by two RuvA subunits (via domain III) on 2 adjacent RuvB subunits; this complex drives branch migration. In the full resolvosome a probable DNA-RuvA(4)-RuvB(12)-RuvC(2) complex forms which resolves the HJ.

The protein resides in the cytoplasm. The catalysed reaction is ATP + H2O = ADP + phosphate + H(+). Its function is as follows. The RuvA-RuvB-RuvC complex processes Holliday junction (HJ) DNA during genetic recombination and DNA repair, while the RuvA-RuvB complex plays an important role in the rescue of blocked DNA replication forks via replication fork reversal (RFR). RuvA specifically binds to HJ cruciform DNA, conferring on it an open structure. The RuvB hexamer acts as an ATP-dependent pump, pulling dsDNA into and through the RuvAB complex. RuvB forms 2 homohexamers on either side of HJ DNA bound by 1 or 2 RuvA tetramers; 4 subunits per hexamer contact DNA at a time. Coordinated motions by a converter formed by DNA-disengaged RuvB subunits stimulates ATP hydrolysis and nucleotide exchange. Immobilization of the converter enables RuvB to convert the ATP-contained energy into a lever motion, pulling 2 nucleotides of DNA out of the RuvA tetramer per ATP hydrolyzed, thus driving DNA branch migration. The RuvB motors rotate together with the DNA substrate, which together with the progressing nucleotide cycle form the mechanistic basis for DNA recombination by continuous HJ branch migration. Branch migration allows RuvC to scan DNA until it finds its consensus sequence, where it cleaves and resolves cruciform DNA. In Bartonella quintana (strain Toulouse) (Rochalimaea quintana), this protein is Holliday junction branch migration complex subunit RuvB.